The sequence spans 206 residues: Small ribosomal subunit protein uS4 (206 aa).

Residues 94 to 156 (RRLDNVVYRL…SRRRMYFKNL (63 aa)) form the S4 RNA-binding domain.

Belongs to the universal ribosomal protein uS4 family. Part of the 30S ribosomal subunit. Contacts protein S5. The interaction surface between S4 and S5 is involved in control of translational fidelity.

In terms of biological role, one of the primary rRNA binding proteins, it binds directly to 16S rRNA where it nucleates assembly of the body of the 30S subunit. Functionally, with S5 and S12 plays an important role in translational accuracy. The polypeptide is Small ribosomal subunit protein uS4 (Roseiflexus castenholzii (strain DSM 13941 / HLO8)).